Reading from the N-terminus, the 173-residue chain is Nanos homolog 3 (173 aa).

Positions 23–51 (KEGPETRLSPQPEPEPMLEPDQKRSLESS) are disordered. The segment at 57–111 (LCSFCKHNGESRAIYQSHVLKDEAGRVLCPILRDYVCPQCGATRERAHTRRFCPL) adopts a Nanos-type zinc-finger fold. Zn(2+) contacts are provided by Cys58, Cys61, His74, Cys85, Cys93, Cys96, His104, and Cys109. 2 short sequence motifs (C2HC) span residues 58-85 (CSFC…RVLC) and 93-109 (CPQC…RRFC). The disordered stretch occupies residues 123–173 (TTRNSAGKKLVRPDKAKTQDTGHRRGGGGGAGFRGAGKSEPSPSCSPSMST). A compositionally biased stretch (basic and acidic residues) spans 133–145 (VRPDKAKTQDTGH). A compositionally biased stretch (low complexity) spans 161-173 (SEPSPSCSPSMST).

The protein belongs to the nanos family. As to quaternary structure, binds mRNA from germ cells. Interacts with PUM2. In terms of tissue distribution, ovary, testis and brain (at protein level). In the ovaries, expressed during multiple stages of oogenesis, including primordial, primary, secondary and antral follicles with the highest expression in the oocytes. In the testis, expressed in germ cells, type A spermatogonia (SA), primary spermatocytes (S1), round spermatids (S3) and elongated spermatids.

It is found in the nucleus. It localises to the cytoplasm. The protein localises to the stress granule. The protein resides in the P-body. In terms of biological role, plays a role in the maintenance of the undifferentiated state of germ cells regulating the spermatogonia cell cycle and inducing a prolonged transit in G1 phase. Affects cell proliferation probably by repressing translation of specific mRNAs. Maintains the germ cell lineage by suppressing both Bax-dependent and -independent apoptotic pathways. Essential in the early stage embryo to protect the migrating primordial germ cells (PGCs) from apoptosis. The polypeptide is Nanos homolog 3 (NANOS3) (Homo sapiens (Human)).